The sequence spans 198 residues: MKIIRKSILAVLVFTILCGIIYPVSTTVLAQVLFKEEANGSIIEVDGKKYGSELLGQQFTDNKYLWGRIMNINVEMFKDSNGKPLMYSSPSNLSPASEEYEKLVKERVERIRSYNKGKEEEPIPVDLVTSSGSGLDPHISVAAAKYQVDRIAKERNLSVDYVNEIIDKYTTGRFLGIFGEKTVNVLKVNLALDGILRE.

A helical transmembrane segment spans residues 8 to 28 (ILAVLVFTILCGIIYPVSTTV).

Belongs to the KdpC family. In terms of assembly, the system is composed of three essential subunits: KdpA, KdpB and KdpC.

It localises to the cell membrane. Functionally, part of the high-affinity ATP-driven potassium transport (or Kdp) system, which catalyzes the hydrolysis of ATP coupled with the electrogenic transport of potassium into the cytoplasm. This subunit acts as a catalytic chaperone that increases the ATP-binding affinity of the ATP-hydrolyzing subunit KdpB by the formation of a transient KdpB/KdpC/ATP ternary complex. In Clostridium perfringens (strain ATCC 13124 / DSM 756 / JCM 1290 / NCIMB 6125 / NCTC 8237 / Type A), this protein is Potassium-transporting ATPase KdpC subunit.